The sequence spans 474 residues: Alanine/serine racemase (474 aa).

Pyridoxal 5'-phosphate contacts are provided by residues Gly-139–Ser-140 and Gln-282. Lys-308 carries the N6-(pyridoxal phosphate)lysine modification. Thr-336 serves as a coordination point for pyridoxal 5'-phosphate.

The protein belongs to the class-III pyridoxal-phosphate-dependent aminotransferase family. As to quaternary structure, homohexamer. Requires pyridoxal 5'-phosphate as cofactor.

It catalyses the reaction L-alanine = D-alanine. The enzyme catalyses L-serine = D-serine. With respect to regulation, completely inhibited by hydroxylamine hydrochloride. Functionally, catalyzes the interconversion of L-alanine and D-alanine, and L-serine and D-serine. Has weak activity with valine and threonine. The sequence is that of Alanine/serine racemase from Pyrococcus horikoshii (strain ATCC 700860 / DSM 12428 / JCM 9974 / NBRC 100139 / OT-3).